We begin with the raw amino-acid sequence, 251 residues long: MTVSIDGVSKYFSKQTRTVQVLENINFQLEKGDFVTVIGPSGCGKSTLLKIIAGLDGEFEGEIIIDGERITKPSKKQGFIFQEHRLFPWLTVEENIAADLSLKDKYVKDKVKEWVEIVRLDGFEKSYPKEISGGMSQRVAIARALLRDPNVLLLDEPFGALDAFTRSHLQEVLLNIWEQKKTTMIFVTHDIDEAIYLSNRIVIMSAKPGKIHKVIENNLPYPRSKTSESFQEIRKKVLQQFERGGLIQTSI.

An ABC transporter domain is found at 3–231 (VSIDGVSKYF…PRSKTSESFQ (229 aa)). Residue 39–46 (GPSGCGKS) participates in ATP binding.

Belongs to the ABC transporter superfamily. Aliphatic sulfonates importer (TC 3.A.1.17.2) family. In terms of assembly, the complex is composed of two ATP-binding proteins (SsuB), two transmembrane proteins (SsuC) and a solute-binding protein (SsuA).

It is found in the cell membrane. It carries out the reaction ATP + H2O + aliphatic sulfonate-[sulfonate-binding protein]Side 1 = ADP + phosphate + aliphatic sulfonateSide 2 + [sulfonate-binding protein]Side 1.. In terms of biological role, part of the ABC transporter complex SsuABC involved in aliphatic sulfonates import. Responsible for energy coupling to the transport system. This is Aliphatic sulfonates import ATP-binding protein SsuB from Bacillus cereus (strain ATCC 10987 / NRS 248).